A 266-amino-acid polypeptide reads, in one-letter code: PDZ domain-containing protein 9 (266 aa).

Residues 27 to 109 (KVIQTKLTVG…GTVLQIKAYR (83 aa)) enclose the PDZ domain.

In Mus musculus (Mouse), this protein is PDZ domain-containing protein 9 (Pdzd9).